The sequence spans 64 residues: Toxin Tce3 (64 aa).

The region spanning 1–62 (KDGYIIEHRG…IFDSNNNKCS (62 aa)) is the LCN-type CS-alpha/beta domain. 4 cysteine pairs are disulfide-bonded: cysteine 11–cysteine 61, cysteine 15–cysteine 37, cysteine 23–cysteine 42, and cysteine 27–cysteine 44.

This sequence belongs to the long (4 C-C) scorpion toxin superfamily. Sodium channel inhibitor family. Beta subfamily. Expressed by the venom gland.

Its subcellular location is the secreted. Functionally, inhibits the sodium (Nav) currents in an apparent irreversible manner. Produces small depolarization and induces repetitive firing in squid axons. Is specific for arthropods (crickets, triatomides, crabs and squids), but is non-toxic to mice. Shows antibacterial activity against both Gram-positive and Gram-negative bacteria. The chain is Toxin Tce3 from Tityus cerroazul (Scorpion).